Consider the following 285-residue polypeptide: Diphthine methyl ester synthase (285 aa).

Residues Leu-9, Asp-84, Gly-87, 112 to 113, and Leu-163 contribute to the S-adenosyl-L-methionine site; that span reads SI. Ser-171 is modified (phosphoserine). S-adenosyl-L-methionine-binding residues include Val-225 and His-250.

It belongs to the diphthine synthase family.

The enzyme catalyses 2-[(3S)-amino-3-carboxypropyl]-L-histidyl-[translation elongation factor 2] + 4 S-adenosyl-L-methionine = diphthine methyl ester-[translation elongation factor 2] + 4 S-adenosyl-L-homocysteine + 3 H(+). It functions in the pathway protein modification; peptidyl-diphthamide biosynthesis. S-adenosyl-L-methionine-dependent methyltransferase that catalyzes four methylations of the modified target histidine residue in translation elongation factor 2 (EF-2), to form an intermediate called diphthine methyl ester. The four successive methylation reactions represent the second step of diphthamide biosynthesis. The sequence is that of Diphthine methyl ester synthase (DPH5) from Homo sapiens (Human).